The primary structure comprises 626 residues: Chaperone protein HtpG (626 aa).

The segment at 1–341 (METKQFKAES…SEDLSLNISR (341 aa)) is a; substrate-binding. The tract at residues 342–552 (EMLQHDRQLK…EGEISIEMEK (211 aa)) is b. The interval 553 to 626 (ILSAMPNNEN…FSNSICKLMI (74 aa)) is c.

This sequence belongs to the heat shock protein 90 family. In terms of assembly, homodimer.

It is found in the cytoplasm. Functionally, molecular chaperone. Has ATPase activity. The chain is Chaperone protein HtpG from Alkaliphilus oremlandii (strain OhILAs) (Clostridium oremlandii (strain OhILAs)).